A 103-amino-acid polypeptide reads, in one-letter code: Protein Rev (103 aa).

S5 bears the Phosphoserine; by host CK2 mark. The interval 18–26 is homomultimerization; the sequence is VIKILYQSN. A compositionally biased stretch (polar residues) spans 25–34; that stretch reads SNPYPNDSGT. 2 disordered regions span residues 25-48 and 66-103; these read SNPY…WRAR and GLQE…TATT. The Nuclear localization signal and RNA-binding (RRE) signature appears at 34-50; it reads TRQARKNRRRRWRARQR. Residues 36-48 are compositionally biased toward basic residues; it reads QARKNRRRRWRAR. A Nuclear export signal and binding to XPO1 motif is present at residues 73 to 84; that stretch reads LPLPPLDRLSLN. At S92 the chain carries Phosphoserine; by host.

This sequence belongs to the HIV-1 REV protein family. In terms of assembly, homomultimer; when bound to the RRE. Multimeric assembly is essential for activity and may involve XPO1. Binds to human KPNB1, XPO1, TNPO1, RANBP5 and IPO7. Interacts with the viral Integrase. Interacts with human KHDRBS1. Interacts with human NAP1; this interaction decreases Rev multimerization and stimulates its activity. Interacts with human DEAD-box helicases DDX3 and DDX24; these interactions may serve for viral RNA export to the cytoplasm and packaging, respectively. Interacts with human PSIP1; this interaction may inhibit HIV-1 DNA integration by promoting dissociation of the Integrase-LEDGF/p75 complex. Asymmetrically arginine dimethylated at one site by host PRMT6. Methylation impairs the RNA-binding activity and export of viral RNA from the nucleus to the cytoplasm. In terms of processing, phosphorylated by protein kinase CK2. Presence of, and maybe binding to the N-terminus of the regulatory beta subunit of CK2 is necessary for CK2-mediated Rev's phosphorylation.

Its subcellular location is the host nucleus. It is found in the host nucleolus. The protein localises to the host cytoplasm. Functionally, escorts unspliced or incompletely spliced viral pre-mRNAs (late transcripts) out of the nucleus of infected cells. These pre-mRNAs carry a recognition sequence called Rev responsive element (RRE) located in the env gene, that is not present in fully spliced viral mRNAs (early transcripts). This function is essential since most viral proteins are translated from unspliced or partially spliced pre-mRNAs which cannot exit the nucleus by the pathway used by fully processed cellular mRNAs. Rev itself is translated from a fully spliced mRNA that readily exits the nucleus. Rev's nuclear localization signal (NLS) binds directly to KPNB1/Importin beta-1 without previous binding to KPNA1/Importin alpha-1. KPNB1 binds to the GDP bound form of RAN (Ran-GDP) and targets Rev to the nucleus. In the nucleus, the conversion from Ran-GDP to Ran-GTP dissociates Rev from KPNB1 and allows Rev's binding to the RRE in viral pre-mRNAs. Rev multimerization on the RRE via cooperative assembly exposes its nuclear export signal (NES) to the surface. Rev can then form a complex with XPO1/CRM1 and Ran-GTP, leading to nuclear export of the complex. Conversion from Ran-GTP to Ran-GDP mediates dissociation of the Rev/RRE/XPO1/RAN complex, so that Rev can return to the nucleus for a subsequent round of export. Beside KPNB1, also seems to interact with TNPO1/Transportin-1, RANBP5/IPO5 and IPO7/RANBP7 for nuclear import. The nucleoporin-like HRB/RIP is an essential cofactor that probably indirectly interacts with Rev to release HIV RNAs from the perinuclear region to the cytoplasm. The polypeptide is Protein Rev (Pan troglodytes (Chimpanzee)).